The sequence spans 105 residues: NADH-quinone oxidoreductase subunit K (105 aa).

Transmembrane regions (helical) follow at residues 9 to 29 (PNYYLVLAAVLFTIGAAGVLV), 34 to 54 (IVLFMCVELMLNAANLTLVTF), and 65 to 85 (IMAFFVMVVAAAEVVVGLAII).

This sequence belongs to the complex I subunit 4L family. In terms of assembly, NDH-1 is composed of 14 different subunits. Subunits NuoA, H, J, K, L, M, N constitute the membrane sector of the complex.

It localises to the cell membrane. It carries out the reaction a quinone + NADH + 5 H(+)(in) = a quinol + NAD(+) + 4 H(+)(out). Its function is as follows. NDH-1 shuttles electrons from NADH, via FMN and iron-sulfur (Fe-S) centers, to quinones in the respiratory chain. The immediate electron acceptor for the enzyme in this species is believed to be a menaquinone. Couples the redox reaction to proton translocation (for every two electrons transferred, four hydrogen ions are translocated across the cytoplasmic membrane), and thus conserves the redox energy in a proton gradient. In Salinispora tropica (strain ATCC BAA-916 / DSM 44818 / JCM 13857 / NBRC 105044 / CNB-440), this protein is NADH-quinone oxidoreductase subunit K.